Reading from the N-terminus, the 216-residue chain is Transmembrane emp24 domain-containing protein eca (216 aa).

The signal sequence occupies residues 1 to 20; it reads MRDQFICLALLLCALHSACG. The Lumenal portion of the chain corresponds to 21-182; sequence LYFHISETER…FRHTSESTNS (162 aa). In terms of domain architecture, GOLD spans 30-126; sequence RKCFIEEVPD…QLRVHLDIQV (97 aa). A coiled-coil region spans residues 134–164; sequence ANVAQKEKLTELQLRIRQLLDQVEQITKEQN. Residues 183–203 traverse the membrane as a helical segment; it reads RVLWWSLAQTLVLVCMGFWQM. The Cytoplasmic segment spans residues 204 to 216; sequence RHLKSFFEAKKLV. The short motif at 213–216 is the Prevents secretion from ER element; the sequence is KKLV.

Belongs to the EMP24/GP25L family.

The protein localises to the endoplasmic reticulum membrane. In terms of biological role, eca and bai are essential, though not redundant, for dorsoventral patterning of the embryo. Specifically required during early embryogenesis for the activity of maternal tkv, while the zygotic tkv is not affected. Involved in Golgi organization. This chain is Transmembrane emp24 domain-containing protein eca, found in Drosophila pseudoobscura pseudoobscura (Fruit fly).